Consider the following 502-residue polypeptide: ATP synthase subunit alpha, chloroplastic (502 aa).

170–177 (GDRQTGKS) lines the ATP pocket.

This sequence belongs to the ATPase alpha/beta chains family. As to quaternary structure, F-type ATPases have 2 components, CF(1) - the catalytic core - and CF(0) - the membrane proton channel. CF(1) has five subunits: alpha(3), beta(3), gamma(1), delta(1), epsilon(1). CF(0) has four main subunits: a, b, b' and c.

The protein localises to the plastid. It is found in the chloroplast thylakoid membrane. It carries out the reaction ATP + H2O + 4 H(+)(in) = ADP + phosphate + 5 H(+)(out). Functionally, produces ATP from ADP in the presence of a proton gradient across the membrane. The alpha chain is a regulatory subunit. In Guillardia theta (Cryptophyte), this protein is ATP synthase subunit alpha, chloroplastic.